The chain runs to 93 residues: Late embryogenesis abundant protein B19.1A (93 aa).

The tract at residues 1-93 (MASGQQERSQ…IDESKFKTKS (93 aa)) is disordered. Composition is skewed to basic and acidic residues over residues 9–19 (SQLDRKAREGE) and 73–93 (GGER…KTKS).

This sequence belongs to the small hydrophilic plant seed protein family. Embryos and young seedlings.

In terms of biological role, lea proteins are late embryonic proteins abundant in higher plant seed embryos. It may have a role in desiccation tolerance by acting as an osmoprotective protein or as a desiccation-damage repair protein. The protein is Late embryogenesis abundant protein B19.1A (B19.1A) of Hordeum vulgare (Barley).